Consider the following 249-residue polypeptide: Eukaryotic translation initiation factor 3 subunit K (249 aa).

Residues 46–222 (FDCYANLALL…VKVPTNKENE (177 aa)) enclose the PCI domain.

This sequence belongs to the eIF-3 subunit K family. Component of the eukaryotic translation initiation factor 3 (eIF-3) complex.

It is found in the cytoplasm. Its function is as follows. Component of the eukaryotic translation initiation factor 3 (eIF-3) complex, which is involved in protein synthesis of a specialized repertoire of mRNAs and, together with other initiation factors, stimulates binding of mRNA and methionyl-tRNAi to the 40S ribosome. The eIF-3 complex specifically targets and initiates translation of a subset of mRNAs involved in cell proliferation. This Aspergillus fumigatus (strain CBS 144.89 / FGSC A1163 / CEA10) (Neosartorya fumigata) protein is Eukaryotic translation initiation factor 3 subunit K.